The chain runs to 296 residues: 4-hydroxybenzoate octaprenyltransferase (296 aa).

The next 8 helical transmembrane spans lie at 22–42 (PIGILLLLWPTLWALWLSALG), 46–66 (WIVVWIFILGTVLMRSAGCVI), 99–121 (LFAGLSLLSFLLVVFLGNTLVIW), 139–159 (FFAIPQAYLGVAFGFGIPMAY), 163–183 (LGEVPAEAWWLLLANVFWAVA), 211–231 (FDVAAVMLCYGVTLAIIGGIG), 238–258 (PAFYAGLAVATCIMGVHYTWI), and 270–290 (FLHNNWVGLSIFVGIVVDFLV).

The protein belongs to the UbiA prenyltransferase family. Mg(2+) is required as a cofactor.

Its subcellular location is the cell inner membrane. The catalysed reaction is all-trans-octaprenyl diphosphate + 4-hydroxybenzoate = 4-hydroxy-3-(all-trans-octaprenyl)benzoate + diphosphate. Its pathway is cofactor biosynthesis; ubiquinone biosynthesis. In terms of biological role, catalyzes the prenylation of para-hydroxybenzoate (PHB) with an all-trans polyprenyl group. Mediates the second step in the final reaction sequence of ubiquinone-8 (UQ-8) biosynthesis, which is the condensation of the polyisoprenoid side chain with PHB, generating the first membrane-bound Q intermediate 3-octaprenyl-4-hydroxybenzoate. The protein is 4-hydroxybenzoate octaprenyltransferase of Dechloromonas aromatica (strain RCB).